The primary structure comprises 428 residues: Sialidase-3 (428 aa).

The FRIP motif signature appears at 24–27 (YRIP). Positions 25 and 45 each coordinate substrate. The active-site Proton acceptor is the D50. One copy of the BNR 1 repeat lies at 129 to 140 (ICSQDAGYSWSD). Residues Y179 and Y181 each contribute to the substrate site. The BNR 2 repeat unit spans residues 203-214 (IYSDDLGATWHH). The substrate site is built by E225 and R245. Residues 254 to 265 (ALSIDHGECFQK) form a BNR 3 repeat. A Phosphoserine modification is found at S314. R341 is a binding site for substrate. Residue Y371 is the Nucleophile of the active site. E388 is a catalytic residue.

This sequence belongs to the glycosyl hydrolase 33 family. As to quaternary structure, interacts with CAV1; this interaction enhances NEU3 sialidase activity within caveola. Interacts with EGFR; this interaction mediates desialylation of EGFR and enhances downstream signaling. Post-translationally, palmitoylated; may regulate intracellular trafficking and anchorage to plasma membrane and endomembranes. Expressed in brain.

It localises to the cell membrane. The protein localises to the membrane. It is found in the caveola. The protein resides in the early endosome membrane. Its subcellular location is the recycling endosome membrane. It localises to the lysosome membrane. The catalysed reaction is Hydrolysis of alpha-(2-&gt;3)-, alpha-(2-&gt;6)-, alpha-(2-&gt;8)- glycosidic linkages of terminal sialic acid residues in oligosaccharides, glycoproteins, glycolipids, colominic acid and synthetic substrates.. The enzyme catalyses a ganglioside GD1a + H2O = a ganglioside GM1 + N-acetylneuraminate. It carries out the reaction a ganglioside GD1a (d18:1(4E)) + H2O = a ganglioside GM1 (d18:1(4E)) + N-acetylneuraminate. It catalyses the reaction a ganglioside GD1b + H2O = a ganglioside GM1 + N-acetylneuraminate. The catalysed reaction is a ganglioside GD1b (d18:1(4E)) + H2O = a ganglioside GM1 (d18:1(4E)) + N-acetylneuraminate. The enzyme catalyses a ganglioside GD3 + H2O = a ganglioside GM3 + N-acetylneuraminate. It carries out the reaction a ganglioside GD3 (d18:1(4E)) + H2O = a ganglioside GM3 (d18:1(4E)) + N-acetylneuraminate. It catalyses the reaction a ganglioside GM3 + H2O = a beta-D-galactosyl-(1-&gt;4)-beta-D-glucosyl-(1&lt;-&gt;1)-ceramide + N-acetylneuraminate. The catalysed reaction is a ganglioside GM1 + H2O = a ganglioside GA1 + N-acetylneuraminate. The enzyme catalyses a ganglioside GM1 (d18:1(4E)) + H2O = a ganglioside GA1 (d18:1(4E)) + N-acetylneuraminate. It carries out the reaction a ganglioside GM2 (d18:1(4E)) + H2O = a ganglioside GA2 (d18:1(4E)) + N-acetylneuraminate. It catalyses the reaction a ganglioside GM3 (d18:1(4E)) + H2O = a beta-D-Gal-(1-&gt;4)-beta-D-Glc-(1&lt;-&gt;1)-Cer(d18:1(4E)) + N-acetylneuraminate. The catalysed reaction is a ganglioside GT1b + H2O = a ganglioside GD1b + N-acetylneuraminate. Functionally, exo-alpha-sialidase that catalyzes the hydrolytic cleavage of the terminal sialic acid (N-acetylneuraminic acid, Neu5Ac) of a glycan moiety in the catabolism of glycolipids, glycoproteins and oligosacharides. Displays high catalytic efficiency for gangliosides including alpha-(2-&gt;3)-sialylated GD1a and GM3 and alpha-(2-&gt;8)-sialylated GD3. Plays a role in the regulation of transmembrane signaling through the modulation of ganglioside content of the lipid bilayer and by direct interaction with signaling receptors, such as EGFR. Desialylates EGFR and activates downstream signaling in proliferating cells. Contributes to clathrin-mediated endocytosis by regulating sorting of endocytosed receptors to early and recycling endosomes. In Bos taurus (Bovine), this protein is Sialidase-3 (NEU3).